The sequence spans 184 residues: NADH-quinone oxidoreductase subunit B (184 aa).

Positions 37, 38, 103, and 132 each coordinate [4Fe-4S] cluster.

Belongs to the complex I 20 kDa subunit family. As to quaternary structure, NDH-1 is composed of 14 different subunits. Subunits NuoB, C, D, E, F, and G constitute the peripheral sector of the complex. It depends on [4Fe-4S] cluster as a cofactor.

Its subcellular location is the cell membrane. The enzyme catalyses a quinone + NADH + 5 H(+)(in) = a quinol + NAD(+) + 4 H(+)(out). In terms of biological role, NDH-1 shuttles electrons from NADH, via FMN and iron-sulfur (Fe-S) centers, to quinones in the respiratory chain. The immediate electron acceptor for the enzyme in this species is believed to be a menaquinone. Couples the redox reaction to proton translocation (for every two electrons transferred, four hydrogen ions are translocated across the cytoplasmic membrane), and thus conserves the redox energy in a proton gradient. The protein is NADH-quinone oxidoreductase subunit B of Nocardioides sp. (strain ATCC BAA-499 / JS614).